The primary structure comprises 1138 residues: Envelopment polyprotein (1138 aa).

Positions 1–18 are cleaved as a signal peptide; the sequence is MEGWYLVVLGVCYTLTLA. Over 19-487 the chain is Lumenal; the sequence is MPKTIYELKM…CVPGLHGWAT (469 aa). 11 disulfides stabilise this stretch: cysteine 30/cysteine 155, cysteine 64/cysteine 161, cysteine 113/cysteine 132, cysteine 137/cysteine 142, cysteine 179/cysteine 189, cysteine 214/cysteine 250, cysteine 239/cysteine 354, cysteine 379/cysteine 438, cysteine 383/cysteine 392, cysteine 408/cysteine 427, and cysteine 455/cysteine 478. N-linked (GlcNAc...) asparagine; by host glycosylation is present at asparagine 138. Asparagine 350 carries N-linked (GlcNAc...) asparagine; by host glycosylation. A glycan (N-linked (GlcNAc...) asparagine; by host) is linked at asparagine 402. A helical membrane pass occupies residues 488-508; that stretch reads VMLLSTFCFGWVLIPAVTLII. Over 509 to 630 the chain is Cytoplasmic; sequence LKCLRVLTFS…LGVFRYKSRC (122 aa). The binding to the ribonucleoprotein stretch occupies residues 519–536; the sequence is CSHYTNESKFKFILEKVK. 2 consecutive CCHC-type zinc fingers follow at residues 548-568 and 573-594; these read CDVCHHECETAKELESHRQSC and CPYCMTITEATESALQAHYSIC. 3 binding to the ribonucleoprotein regions span residues 591-608, 595-606, and 614-628; these read YSICKLTGRFQEALKKSL, KLTGRFQEALKK, and KKGCYRTLGVFRYKS. Positions 610–637 are interaction with host TRAF3; the sequence is KPEVKKGCYRTLGVFRYKSRCYVGLVWC. Residues 614-637 enclose the ITAM domain; that stretch reads KKGCYRTLGVFRYKSRCYVGLVWC. Tyrosine 618 and tyrosine 631 each carry phosphotyrosine. A YxxL motif is present at residues 618–621; the sequence is YRTL. The chain crosses the membrane as a helical span at residues 631 to 651; sequence YVGLVWCLLLTCEIVIWAASA. The Lumenal portion of the chain corresponds to 652–1107; that stretch reads ETPLMESGWS…EWLLGILNGN (456 aa). Cystine bridges form between cysteine 738/cysteine 773, cysteine 742/cysteine 780, cysteine 754/cysteine 887, cysteine 768/cysteine 898, cysteine 783/cysteine 906, cysteine 809/cysteine 818, cysteine 826/cysteine 835, and cysteine 866/cysteine 870. The fusion loop stretch occupies residues 760–780; that stretch reads YQYETGWGCNPGDCPGVGTGC. N-linked (GlcNAc...) asparagine; by host glycosylation is present at asparagine 930. Cystine bridges form between cysteine 972–cysteine 1002, cysteine 995–cysteine 1047, cysteine 1012–cysteine 1017, cysteine 1048–cysteine 1053, and cysteine 1087–cysteine 1091. Residues 1108-1128 traverse the membrane as a helical segment; sequence WIVVVVLVVILILSIIMFSVL. A binding to the ribonucleoprotein region spans residues 1124-1138; it reads MFSVLCPRRGHKKTV. At 1129–1138 the chain is on the cytoplasmic side; that stretch reads CPRRGHKKTV.

Belongs to the hantavirus envelope glycoprotein family. As to quaternary structure, homodimer. Homotetramer; forms heterotetrameric Gn-Gc spikes in the pre-fusion conformation. Interacts (via C-terminus) with the nucleoprotein. Interacts with host TUFM; this interaction contributes to the virus-induced degradation of mitochondria by autophagy, which leads to degradation of host MAVS and inhibition of type I interferon (IFN) responses. Interacts with host MAP1LC3B; this interaction contributes to the virus-induced degradation of mitochondria by autophagy, which leads to degradation of host MAVS and inhibition of type I interferon (IFN) responses. Interacts (via C-terminus) with host TRAF3; this interaction inhibits the formation of TRAF3-TBK1 complexes. Homodimer. Homotetramer; forms heterotetrameric Gn-Gc spikes in the pre-fusion conformation. Homotrimer; forms homotrimer in the post-fusion conformation at acidic pH. Interacts (via C-terminus) with the nucleoprotein. In terms of processing, envelope polyprotein precursor is quickly cleaved in vivo just after synthesis, presumably by host signal peptidase.

The protein resides in the virion membrane. The protein localises to the host cell surface. It is found in the host Golgi apparatus membrane. Its subcellular location is the host endoplasmic reticulum membrane. It localises to the host mitochondrion. Forms homotetramers with glycoprotein C at the surface of the virion. Attaches the virion to host cell receptors including integrin ITGAV/ITGB3. This attachment induces virion internalization possibly through clathrin-dependent endocytosis and dynamin-independent macropinocytosis. Mediates the assembly and budding of infectious virus particles through its interaction with the nucleocapsid protein and the viral genome. May dysregulate normal immune and endothelial cell responses through an ITAM motif. Translocates to mitochondria, binds to host TUFM and recruits MAP1LC3B. These interactions induce mitochondrial autophagy and therefore destruction of host MAVS leading to inhibition of type I interferon (IFN) responses. Concomitant breakdown of glycoprotein N is apparently prevented by the nucleoprotein that may inhibit Gn-stimulated autophagosome-lysosome fusion. Interacts with the viral genomic RNA. Inhibits the host RIG-I/TBK1 pathway by disrupting the formation of TBK1-TRAF3 complexes and downstream signaling responses required for IFN-beta transcription. Its function is as follows. Forms homotetramers with glycoprotein N at the surface of the virion. Attaches the virion to host cell receptors including integrin ITGAV/ITGB3. This attachment induces virion internalization predominantly through clathrin-dependent endocytosis. Class II fusion protein that promotes fusion of viral membrane with host endosomal membrane after endocytosis of the virion. In Abrothrix longipilis (Long-haired grass mouse), this protein is Envelopment polyprotein (GP).